The chain runs to 413 residues: Eukaryotic initiation factor 4A-9 (413 aa).

The Q motif motif lies at 40-68 (HSFDAMGLKENLLRGIYAYGFEKPSAIQQ). Residues 71–241 (IVPFCKGLDV…RKFMNKPVRI (171 aa)) enclose the Helicase ATP-binding domain. Position 84–91 (84–91 (AQSGTGKT)) interacts with ATP. A DEAD box motif is present at residues 189–192 (DEAD). The Helicase C-terminal domain occupies 252-413 (GIKQFYVNVD…ELPANVADLL (162 aa)).

Belongs to the DEAD box helicase family. eIF4A subfamily. In terms of assembly, eIF4F is a multi-subunit complex, the composition of which varies with external and internal environmental conditions. It is composed of at least EIF4A, EIF4E and EIF4G.

It catalyses the reaction ATP + H2O = ADP + phosphate + H(+). ATP-dependent RNA helicase which is a subunit of the eIF4F complex involved in cap recognition and is required for mRNA binding to ribosome. In the current model of translation initiation, eIF4A unwinds RNA secondary structures in the 5'-UTR of mRNAs which is necessary to allow efficient binding of the small ribosomal subunit, and subsequent scanning for the initiator codon. This chain is Eukaryotic initiation factor 4A-9, found in Nicotiana tabacum (Common tobacco).